A 360-amino-acid polypeptide reads, in one-letter code: Histidinol-phosphate aminotransferase (360 aa).

At lysine 222 the chain carries N6-(pyridoxal phosphate)lysine.

It belongs to the class-II pyridoxal-phosphate-dependent aminotransferase family. Histidinol-phosphate aminotransferase subfamily. As to quaternary structure, homodimer. The cofactor is pyridoxal 5'-phosphate.

It carries out the reaction L-histidinol phosphate + 2-oxoglutarate = 3-(imidazol-4-yl)-2-oxopropyl phosphate + L-glutamate. It functions in the pathway amino-acid biosynthesis; L-histidine biosynthesis; L-histidine from 5-phospho-alpha-D-ribose 1-diphosphate: step 7/9. This is Histidinol-phosphate aminotransferase from Listeria monocytogenes serotype 4b (strain F2365).